Consider the following 295-residue polypeptide: Nucleotide-binding protein LACR_1047 (295 aa).

12-19 contributes to the ATP binding site; it reads GMSGAGKT. 63-66 lines the GTP pocket; sequence DMRS.

This sequence belongs to the RapZ-like family.

Functionally, displays ATPase and GTPase activities. This Lactococcus lactis subsp. cremoris (strain SK11) protein is Nucleotide-binding protein LACR_1047.